Here is a 312-residue protein sequence, read N- to C-terminus: MRLVFAGTPEFARIALDALLAAGHDVPLVLTQPDRPAGRGLKLTPSPVKQAALAAGIEVAQPRSLRLDGRYPDEAAAARAQLERVAPDVMVVAAYGLILPQWTLDLPRLGCLNIHASLLPRWRGAAPIQRAIEAGDAETGVTIMQMDAGLDTGDMLLERAVPIGAQQTAAQLHDELALAGGQAIVDALAALGQGGLAPRRQPDAGVTYAAKLDKAEAALDCSLPAAVLARRVRAFNPVPGATIRLPGLDDPVKVWRAQALEQAAGGPPGAVLRADAQGIDIATGQGVLRLLELQKAGGKRQPVDVFVRGWQP.

Residue 117–120 (SLLP) participates in (6S)-5,6,7,8-tetrahydrofolate binding.

This sequence belongs to the Fmt family.

The catalysed reaction is L-methionyl-tRNA(fMet) + (6R)-10-formyltetrahydrofolate = N-formyl-L-methionyl-tRNA(fMet) + (6S)-5,6,7,8-tetrahydrofolate + H(+). Functionally, attaches a formyl group to the free amino group of methionyl-tRNA(fMet). The formyl group appears to play a dual role in the initiator identity of N-formylmethionyl-tRNA by promoting its recognition by IF2 and preventing the misappropriation of this tRNA by the elongation apparatus. This is Methionyl-tRNA formyltransferase from Bordetella bronchiseptica (strain ATCC BAA-588 / NCTC 13252 / RB50) (Alcaligenes bronchisepticus).